Consider the following 394-residue polypeptide: Actin-related protein 2-A (394 aa).

ATP contacts are provided by residues 160–162 (GDG), 214–218 (RMIKE), and 305–310 (GGSTMY).

This sequence belongs to the actin family. ARP2 subfamily. In terms of assembly, component of the Arp2/3 complex composed of actr2/arp2, actr3/arp3, arpc1 (arpc1a or arpc1b), arpc2, arpc3, arpc4 and arpc5.

It localises to the cytoplasm. Its subcellular location is the cytoskeleton. The protein localises to the cell projection. The protein resides in the nucleus. Functionally, ATP-binding component of the Arp2/3 complex, a multiprotein complex that mediates actin polymerization upon stimulation by nucleation-promoting factor (NPF). The Arp2/3 complex mediates the formation of branched actin networks in the cytoplasm, providing the force for cell motility. Seems to contact the pointed end of the daughter actin filament. In addition to its role in the cytoplasmic cytoskeleton, the Arp2/3 complex also promotes actin polymerization in the nucleus, thereby regulating gene transcription and repair of damaged DNA. The Arp2/3 complex promotes homologous recombination (HR) repair in response to DNA damage by promoting nuclear actin polymerization, leading to drive motility of double-strand breaks (DSBs). In Xenopus laevis (African clawed frog), this protein is Actin-related protein 2-A (actr2-a).